Reading from the N-terminus, the 692-residue chain is MARKTPLNRIRNIGIAAHIDAGKTTTSERILFYTGVSHKIGEVHDGAATMDWMEQEKERGITITSAATTCFWKDHQINLIDTPGHVDFTIEVERSMRVLDGAVSVFCSVGGVQPQSETVWRQANKYGVPRIVFVNKMDRIGANFYNVENQIKQRLKANPVPINIPIGAEDTFIGVIDLVQMKAIVWNNETMGAKYDVEEIPSDLLEKAKQYREKLVEAVAEQDEALMEKYLGGEELDIEEIKKGIKTGCLNMSFVPMLCGSSFKNKGVQTLLDAVIDYLPAPTEVVDIKGIDPKTEEEVFVKSSDDGEFAGLAFKIMTDPFVGQLTFVRVYRGKLESGSYVYNSTKDKKERVGRLLKMHSNKREDIKEVYAGEICAFVGLKDTLTGDTLCDEKNAVVLERMEFPEPVIHIAVEPKTKADQEKMGVALGKLAEEDPSFRVMTQEETGQTLIGGMGELHLEIIVDRLKREFKVEAEIGQPQVAFRETIRSSVSKEHKYAKQSGGRGQYGHVFIKLEPKEPGSGYEFVNEISGGVIPKEYIPAVDKGIQEAMQNGVLAGYPVVDFKVTLYDGSYHDVDSSEMAFKIAGSMAFKEASRAANPVLLEPMMKVEVEVPEEYMGDVIGDLNRRRGQINSMDDRLGLKIVNAFVPLVEMFGYSTDLRSATQGRGTYSMEFDHYGEVPSNIAKEIVEKRKG.

In terms of domain architecture, tr-type G spans 8-283; sequence NRIRNIGIAA…AVIDYLPAPT (276 aa). GTP is bound by residues 17 to 24, 81 to 85, and 135 to 138; these read AHIDAGKT, DTPGH, and NKMD.

The protein belongs to the TRAFAC class translation factor GTPase superfamily. Classic translation factor GTPase family. EF-G/EF-2 subfamily.

Its subcellular location is the cytoplasm. Its function is as follows. Catalyzes the GTP-dependent ribosomal translocation step during translation elongation. During this step, the ribosome changes from the pre-translocational (PRE) to the post-translocational (POST) state as the newly formed A-site-bound peptidyl-tRNA and P-site-bound deacylated tRNA move to the P and E sites, respectively. Catalyzes the coordinated movement of the two tRNA molecules, the mRNA and conformational changes in the ribosome. This chain is Elongation factor G (fusA), found in Helicobacter pylori (strain J99 / ATCC 700824) (Campylobacter pylori J99).